The primary structure comprises 65 residues: Large ribosomal subunit protein bL33c (65 aa).

It belongs to the bacterial ribosomal protein bL33 family.

It is found in the plastid. Its subcellular location is the chloroplast. This chain is Large ribosomal subunit protein bL33c, found in Gracilaria tenuistipitata var. liui (Red alga).